Reading from the N-terminus, the 255-residue chain is CDP-diacylglycerol pyrophosphatase (255 aa).

The chain crosses the membrane as a helical span at residues 5-27 (LLITVALIAVLALTTLVAWRYLF).

Belongs to the Cdh family.

The protein resides in the cell inner membrane. The catalysed reaction is a CDP-1,2-diacyl-sn-glycerol + H2O = a 1,2-diacyl-sn-glycero-3-phosphate + CMP + 2 H(+). Its pathway is phospholipid metabolism; CDP-diacylglycerol degradation; phosphatidate from CDP-diacylglycerol: step 1/1. The protein is CDP-diacylglycerol pyrophosphatase of Cronobacter sakazakii (strain ATCC BAA-894) (Enterobacter sakazakii).